Reading from the N-terminus, the 261-residue chain is GTP cyclohydrolase FolE2 (261 aa).

It belongs to the GTP cyclohydrolase IV family.

The enzyme catalyses GTP + H2O = 7,8-dihydroneopterin 3'-triphosphate + formate + H(+). Its pathway is cofactor biosynthesis; 7,8-dihydroneopterin triphosphate biosynthesis; 7,8-dihydroneopterin triphosphate from GTP: step 1/1. Converts GTP to 7,8-dihydroneopterin triphosphate. This Herminiimonas arsenicoxydans protein is GTP cyclohydrolase FolE2.